Here is a 174-residue protein sequence, read N- to C-terminus: Thioredoxin O, mitochondrial (174 aa).

Residues 1–59 (MALAHRLCRLPRLLPLAAAAAASKPYLPGKPSPAPPPPLSSPPPFPSLSRLFSTTPSSS) constitute a mitochondrion transit peptide. Residues 60-172 (GDSSMVVVGS…LESTMESLHK (113 aa)) enclose the Thioredoxin domain. Active-site nucleophile residues include cysteine 96 and cysteine 99. A disulfide bridge links cysteine 96 with cysteine 99.

Belongs to the thioredoxin family. Plant O-type subfamily.

It is found in the mitochondrion. Its function is as follows. Probable thiol-disulfide oxidoreductase that may participate in various redox reactions. This chain is Thioredoxin O, mitochondrial, found in Oryza sativa subsp. japonica (Rice).